The sequence spans 1226 residues: Methionine synthase (1226 aa).

Residues 6–326 (RAQIEAQLKQ…EHIRHMAMAV (321 aa)) form the Hcy-binding domain. C248, C311, and C312 together coordinate Zn(2+). The Pterin-binding domain maps to 357-618 (FVNVGERTNV…VPEKLREAVE (262 aa)). Residues 651–745 (SALEWRTWSV…FINASKQAGS (95 aa)) enclose the B12-binding N-terminal domain. Residues E695, 757–761 (GDVHD), H760, S805, T809, and A861 each bind methylcob(III)alamin. One can recognise a B12-binding domain in the interval 747–882 (NGKILLATVK…SDELRPAFVE (136 aa)). One can recognise an AdoMet activation domain in the interval 898–1226 (KKPRTKPVTL…EKWLGPNING (329 aa)). S-adenosyl-L-methionine contacts are provided by residues D948, R1136, and 1191 to 1192 (YF).

This sequence belongs to the vitamin-B12 dependent methionine synthase family. Requires methylcob(III)alamin as cofactor. It depends on Zn(2+) as a cofactor.

It carries out the reaction (6S)-5-methyl-5,6,7,8-tetrahydrofolate + L-homocysteine = (6S)-5,6,7,8-tetrahydrofolate + L-methionine. Its pathway is amino-acid biosynthesis; L-methionine biosynthesis via de novo pathway; L-methionine from L-homocysteine (MetH route): step 1/1. Catalyzes the transfer of a methyl group from methyl-cobalamin to homocysteine, yielding enzyme-bound cob(I)alamin and methionine. Subsequently, remethylates the cofactor using methyltetrahydrofolate. This chain is Methionine synthase (metH), found in Vibrio vulnificus (strain CMCP6).